A 105-amino-acid chain; its full sequence is MAANKTLPTYFCRNCENPLALGEDLISKKFVGASGPAFMFSHAMNVVVGPKIGRKLITGSYVVADVMCSKCGETLGWKYVETFDLKQRYKEGMFVIEKLKLTKRY.

In terms of domain architecture, Yippee spans 8–105 (PTYFCRNCEN…IEKLKLTKRY (98 aa)). Zn(2+) contacts are provided by cysteine 12, cysteine 15, cysteine 68, and cysteine 71.

It belongs to the yippee family.

This is Protein yippee-like At4g27740 from Arabidopsis thaliana (Mouse-ear cress).